A 202-amino-acid polypeptide reads, in one-letter code: Small ribosomal subunit protein uS4 (202 aa).

Basic residues predominate over residues 1-13 (MSRYRGPRLRVTR). The disordered stretch occupies residues 1 to 42 (MSRYRGPRLRVTRRLGELPGLTRKASKKSNPPGQHGQARRKR). The 63-residue stretch at 90 to 152 (NRLDNVCFRL…KASKKLVEGN (63 aa)) folds into the S4 RNA-binding domain.

This sequence belongs to the universal ribosomal protein uS4 family. In terms of assembly, part of the 30S ribosomal subunit. Contacts protein S5. The interaction surface between S4 and S5 is involved in control of translational fidelity.

Functionally, one of the primary rRNA binding proteins, it binds directly to 16S rRNA where it nucleates assembly of the body of the 30S subunit. In terms of biological role, with S5 and S12 plays an important role in translational accuracy. The chain is Small ribosomal subunit protein uS4 from Prochlorococcus marinus (strain MIT 9312).